The primary structure comprises 467 residues: Constitutive acid phosphatase (467 aa).

Positions 1–17 are cleaved as a signal peptide; sequence MFKSVVYSVLAAALVNA. His75 functions as the Nucleophile in the catalytic mechanism. 6 N-linked (GlcNAc...) asparagine glycosylation sites follow: Asn97, Asn103, Asn162, Asn192, Asn250, and Asn315. Asp338 (proton donor) is an active-site residue. N-linked (GlcNAc...) asparagine glycans are attached at residues Asn356, Asn390, Asn439, Asn445, Asn456, and Asn461.

It belongs to the histidine acid phosphatase family.

It catalyses the reaction a phosphate monoester + H2O = an alcohol + phosphate. In Saccharomyces cerevisiae (strain ATCC 204508 / S288c) (Baker's yeast), this protein is Constitutive acid phosphatase (PHO3).